The sequence spans 386 residues: Bifunctional enzyme IspD/IspF (386 aa).

The 2-C-methyl-D-erythritol 4-phosphate cytidylyltransferase stretch occupies residues 1 to 225 (MYNFVTLSIL…SCLSAPSSDT (225 aa)). A 2-C-methyl-D-erythritol 2,4-cyclodiphosphate synthase region spans residues 226 to 386 (LSGVGFDVHA…NLKYFDWTKI (161 aa)). 2 residues coordinate a divalent metal cation: D232 and H234. 4-CDP-2-C-methyl-D-erythritol 2-phosphate-binding positions include 232–234 (DVH) and 258–259 (HS). H266 serves as a coordination point for a divalent metal cation. 4-CDP-2-C-methyl-D-erythritol 2-phosphate is bound by residues 280–282 (DIG), 285–289 (FPDND), 356–359 (TTTE), F363, and R366.

It in the N-terminal section; belongs to the IspD/TarI cytidylyltransferase family. IspD subfamily. In the C-terminal section; belongs to the IspF family. The cofactor is a divalent metal cation.

The enzyme catalyses 2-C-methyl-D-erythritol 4-phosphate + CTP + H(+) = 4-CDP-2-C-methyl-D-erythritol + diphosphate. It carries out the reaction 4-CDP-2-C-methyl-D-erythritol 2-phosphate = 2-C-methyl-D-erythritol 2,4-cyclic diphosphate + CMP. Its pathway is isoprenoid biosynthesis; isopentenyl diphosphate biosynthesis via DXP pathway; isopentenyl diphosphate from 1-deoxy-D-xylulose 5-phosphate: step 2/6. The protein operates within isoprenoid biosynthesis; isopentenyl diphosphate biosynthesis via DXP pathway; isopentenyl diphosphate from 1-deoxy-D-xylulose 5-phosphate: step 4/6. In terms of biological role, bifunctional enzyme that catalyzes the formation of 4-diphosphocytidyl-2-C-methyl-D-erythritol from CTP and 2-C-methyl-D-erythritol 4-phosphate (MEP) (IspD), and catalyzes the conversion of 4-diphosphocytidyl-2-C-methyl-D-erythritol 2-phosphate (CDP-ME2P) to 2-C-methyl-D-erythritol 2,4-cyclodiphosphate (ME-CPP) with a corresponding release of cytidine 5-monophosphate (CMP) (IspF). The chain is Bifunctional enzyme IspD/IspF from Sulfurimonas denitrificans (strain ATCC 33889 / DSM 1251) (Thiomicrospira denitrificans (strain ATCC 33889 / DSM 1251)).